Reading from the N-terminus, the 78-residue chain is Acyl carrier protein (78 aa).

Residues 2–77 (SDILERVRKI…DAVKFITEKT (76 aa)) form the Carrier domain. Position 37 is an O-(pantetheine 4'-phosphoryl)serine (Ser37).

Belongs to the acyl carrier protein (ACP) family. 4'-phosphopantetheine is transferred from CoA to a specific serine of apo-ACP by AcpS. This modification is essential for activity because fatty acids are bound in thioester linkage to the sulfhydryl of the prosthetic group.

It is found in the cytoplasm. It functions in the pathway lipid metabolism; fatty acid biosynthesis. Functionally, carrier of the growing fatty acid chain in fatty acid biosynthesis. The chain is Acyl carrier protein from Caulobacter vibrioides (strain ATCC 19089 / CIP 103742 / CB 15) (Caulobacter crescentus).